The following is a 210-amino-acid chain: Prolactin (210 aa).

Residues 1-23 (MARRSQGTKLHLAVLCLVVSCHA) form the signal peptide. 2 disulfides stabilise this stretch: Cys-69-Cys-183 and Cys-200-Cys-210.

This sequence belongs to the somatotropin/prolactin family. Pituitary gland.

It localises to the secreted. The polypeptide is Prolactin (prl) (Coregonus autumnalis (Arctic cisco)).